Here is a 353-residue protein sequence, read N- to C-terminus: Paraneoplastic antigen Ma1 homolog (353 aa).

This sequence belongs to the PNMA family. In terms of tissue distribution, predominantly expressed in testis. Very low levels in the brain, including in the piriform cortex, hippocampus and some subcortical nuclei.

Its subcellular location is the nucleus. The protein localises to the nucleolus. The protein is Paraneoplastic antigen Ma1 homolog (Pnma1) of Mus musculus (Mouse).